A 333-amino-acid chain; its full sequence is Homeobox protein engrailed-2 (333 aa).

3 disordered regions span residues Met-1–Met-49, Gly-95–Leu-206, and Ser-223–Ala-250. Composition is skewed to gly residues over residues Pro-25 to Ser-36 and Gly-95 to Gly-117. 2 stretches are compositionally biased toward low complexity: residues Pro-142 to Pro-151 and Leu-191 to Ser-200. The segment at residues Asp-244 to Thr-303 is a DNA-binding region (homeobox).

Belongs to the engrailed homeobox family.

It localises to the nucleus. The sequence is that of Homeobox protein engrailed-2 (EN2) from Homo sapiens (Human).